Here is a 175-residue protein sequence, read N- to C-terminus: Inorganic pyrophosphatase (175 aa).

Residues Lys29, Arg43, and Tyr55 each contribute to the substrate site. 3 residues coordinate Mg(2+): Asp65, Asp70, and Asp102. Residue Tyr141 participates in substrate binding.

The protein belongs to the PPase family. As to quaternary structure, homohexamer. It depends on Mg(2+) as a cofactor.

The protein localises to the cytoplasm. It catalyses the reaction diphosphate + H2O = 2 phosphate + H(+). Catalyzes the hydrolysis of inorganic pyrophosphate (PPi) forming two phosphate ions. The polypeptide is Inorganic pyrophosphatase (Rickettsia bellii (strain RML369-C)).